Consider the following 220-residue polypeptide: Large ribosomal subunit protein uL3 (220 aa).

The interval 127-155 (FQGAIKRHGQSRGPMSHSSHFHRAPDSVG) is disordered.

The protein belongs to the universal ribosomal protein uL3 family. In terms of assembly, part of the 50S ribosomal subunit. Forms a cluster with proteins L14 and L19.

Its function is as follows. One of the primary rRNA binding proteins, it binds directly near the 3'-end of the 23S rRNA, where it nucleates assembly of the 50S subunit. In Staphylococcus aureus (strain JH9), this protein is Large ribosomal subunit protein uL3.